Reading from the N-terminus, the 125-residue chain is Fluoride-specific ion channel FluC (125 aa).

A run of 4 helical transmembrane segments spans residues 5-25, 33-53, 66-86, and 100-120; these read IFLV…VSLL, IFPL…GILV, VKIF…SFSL, and LVLY…LGYI. Glycine 76 and threonine 79 together coordinate Na(+).

Belongs to the fluoride channel Fluc/FEX (TC 1.A.43) family.

The protein localises to the cell inner membrane. The catalysed reaction is fluoride(in) = fluoride(out). Its activity is regulated as follows. Na(+) is not transported, but it plays an essential structural role and its presence is essential for fluoride channel function. In terms of biological role, fluoride-specific ion channel. Important for reducing fluoride concentration in the cell, thus reducing its toxicity. The protein is Fluoride-specific ion channel FluC of Azobacteroides pseudotrichonymphae genomovar. CFP2.